A 334-amino-acid chain; its full sequence is MVREEIAVSTRTLQWKCVESRADSKRLYYGRFMLSPLMKGQADTIGIAMRRALLGEIEGTCITRAKLDKVPHEYSTIVGIEESIHEIFMNLKEIVLRSNLYGTRNASICVRGPRYVTAQDIISPPSVEIVDTTQHIASLTEPIDLCIELQIQRDRGYRMKTPNKYQNGSYPIDAVSMPVRNANHSIHSYGNGNEKQEILFLEIWTNGSLTPKEALHEASRNLIDLFIPFLHAEEEGIRLEDNPNRFNIPFFTFHDGLANTNIRKKKKGIALKCIFIDQSELPPRTYNYLKRSNINTLLDLLSNSQEDFLKIEHFRIEDVKQILDILQKHFTIDC.

An alpha N-terminal domain (alpha-NTD) region spans residues 1-232 (MVREEIAVST…IDLFIPFLHA (232 aa)). An alpha C-terminal domain (alpha-CTD) region spans residues 268–334 (GIALKCIFID…ILQKHFTIDC (67 aa)).

It belongs to the RNA polymerase alpha chain family. In plastids the minimal PEP RNA polymerase catalytic core is composed of four subunits: alpha, beta, beta', and beta''. When a (nuclear-encoded) sigma factor is associated with the core the holoenzyme is formed, which can initiate transcription.

It localises to the plastid. Its subcellular location is the chloroplast. It carries out the reaction RNA(n) + a ribonucleoside 5'-triphosphate = RNA(n+1) + diphosphate. Functionally, DNA-dependent RNA polymerase catalyzes the transcription of DNA into RNA using the four ribonucleoside triphosphates as substrates. In Chloranthus spicatus (Chulantree), this protein is DNA-directed RNA polymerase subunit alpha.